We begin with the raw amino-acid sequence, 123 residues long: Immunoglobulin lambda variable 5-45 (123 aa).

A signal peptide spans 1–19; that stretch reads MAWTPLLLLFLSHCTGSLS. The tract at residues 20–44 is framework-1; sequence QAVLTQPSSLSASPGASASLTCTLC. Residues 20 to 123 enclose the Ig-like domain; it reads QAVLTQPSSL…YCMIWHSSAS (104 aa). A disulfide bridge links C41 with C115. A complementarity-determining-1 region spans residues 45–53; the sequence is SGINVGTYR. Positions 54–70 are framework-2; that stretch reads IYWYQQKPGSPPQYLLR. Positions 68–92 are disordered; the sequence is LLRYKSDSDKQQGSGVPSRFSGSKD. A complementarity-determining-2 region spans residues 71–77; that stretch reads YKSDSDK. The span at 78 to 92 shows a compositional bias: polar residues; that stretch reads QQGSGVPSRFSGSKD. Residues 78–115 form a framework-3 region; sequence QQGSGVPSRFSGSKDASANAGILLISGLQSEDEADYYC. A complementarity-determining-3 region spans residues 116–123; the sequence is MIWHSSAS.

Immunoglobulins are composed of two identical heavy chains and two identical light chains; disulfide-linked.

The protein localises to the secreted. It is found in the cell membrane. Functionally, v region of the variable domain of immunoglobulin light chains that participates in the antigen recognition. Immunoglobulins, also known as antibodies, are membrane-bound or secreted glycoproteins produced by B lymphocytes. In the recognition phase of humoral immunity, the membrane-bound immunoglobulins serve as receptors which, upon binding of a specific antigen, trigger the clonal expansion and differentiation of B lymphocytes into immunoglobulins-secreting plasma cells. Secreted immunoglobulins mediate the effector phase of humoral immunity, which results in the elimination of bound antigens. The antigen binding site is formed by the variable domain of one heavy chain, together with that of its associated light chain. Thus, each immunoglobulin has two antigen binding sites with remarkable affinity for a particular antigen. The variable domains are assembled by a process called V-(D)-J rearrangement and can then be subjected to somatic hypermutations which, after exposure to antigen and selection, allow affinity maturation for a particular antigen. The protein is Immunoglobulin lambda variable 5-45 of Homo sapiens (Human).